A 105-amino-acid polypeptide reads, in one-letter code: Small ribosomal subunit protein uS10 (105 aa).

Belongs to the universal ribosomal protein uS10 family. In terms of assembly, part of the 30S ribosomal subunit.

Its function is as follows. Involved in the binding of tRNA to the ribosomes. The chain is Small ribosomal subunit protein uS10 from Synechocystis sp. (strain ATCC 27184 / PCC 6803 / Kazusa).